Here is a 335-residue protein sequence, read N- to C-terminus: ETS translocation variant 2 (335 aa).

Disordered stretches follow at residues 94–138 and 201–220; these read DPWS…SWSH and GHQSPAFTTPSKSNKQSDRA. Residues 205-220 are compositionally biased toward polar residues; that stretch reads PAFTTPSKSNKQSDRA. The ETS DNA-binding region spans 234-314; that stretch reads IQLWQFLLEL…GGRKYTYRFG (81 aa).

It belongs to the ETS family. In terms of tissue distribution, testis.

Its subcellular location is the nucleus. Its function is as follows. Binds to DNA sequences containing the consensus pentanucleotide 5'-CGGA[AT]-3'. This is ETS translocation variant 2 (Etv2) from Mus musculus (Mouse).